A 1291-amino-acid polypeptide reads, in one-letter code: DNA-directed RNA polymerase subunit beta (1291 aa).

The protein belongs to the RNA polymerase beta chain family. In terms of assembly, the RNAP catalytic core consists of 2 alpha, 1 beta, 1 beta' and 1 omega subunit. When a sigma factor is associated with the core the holoenzyme is formed, which can initiate transcription.

It carries out the reaction RNA(n) + a ribonucleoside 5'-triphosphate = RNA(n+1) + diphosphate. In terms of biological role, DNA-dependent RNA polymerase catalyzes the transcription of DNA into RNA using the four ribonucleoside triphosphates as substrates. The protein is DNA-directed RNA polymerase subunit beta of Mycoplasma mycoides subsp. mycoides SC (strain CCUG 32753 / NCTC 10114 / PG1).